Here is a 474-residue protein sequence, read N- to C-terminus: GTPase Der (474 aa).

EngA-type G domains lie at 3-167 and 204-379; these read LTIA…GSER and IRIA…RVWN. GTP contacts are provided by residues 9 to 16, 56 to 60, 119 to 122, 210 to 217, 257 to 261, and 322 to 325; these read GRPNVGKS, DTAGL, NKSE, GRPNTGKS, and NKWD. Residues 380–464 enclose the KH-like domain; that stretch reads RRISTAKLNQ…PVRLSLRASD (85 aa).

It belongs to the TRAFAC class TrmE-Era-EngA-EngB-Septin-like GTPase superfamily. EngA (Der) GTPase family. As to quaternary structure, associates with the 50S ribosomal subunit.

Its function is as follows. GTPase that plays an essential role in the late steps of ribosome biogenesis. The polypeptide is GTPase Der (Bartonella tribocorum (strain CIP 105476 / IBS 506)).